Consider the following 151-residue polypeptide: MSEEQQTQPQLALERLYTKDISFEVPGPQVFTKQWQPELNINLSSSAEKIDPTHFEVSLKVVVQANNEGETAFIVDVTQSGIFLIDNIEEDRLPYILGAYCPNILFPFLREAVNDMVTKGSFPQLLLTPINFDAEFEANLERAQTAVEGQA.

Belongs to the SecB family. In terms of assembly, homotetramer, a dimer of dimers. One homotetramer interacts with 1 SecA dimer.

The protein localises to the cytoplasm. In terms of biological role, one of the proteins required for the normal export of preproteins out of the cell cytoplasm. It is a molecular chaperone that binds to a subset of precursor proteins, maintaining them in a translocation-competent state. It also specifically binds to its receptor SecA. In Acinetobacter baylyi (strain ATCC 33305 / BD413 / ADP1), this protein is Protein-export protein SecB.